A 377-amino-acid polypeptide reads, in one-letter code: Succinyl-diaminopimelate desuccinylase (377 aa).

Position 68 (His68) interacts with Zn(2+). Residue Asp70 is part of the active site. Asp101 is a binding site for Zn(2+). Glu135 serves as the catalytic Proton acceptor. Residues Glu136, Glu164, and His350 each contribute to the Zn(2+) site.

It belongs to the peptidase M20A family. DapE subfamily. Homodimer. The cofactor is Zn(2+). Co(2+) serves as cofactor.

It catalyses the reaction N-succinyl-(2S,6S)-2,6-diaminopimelate + H2O = (2S,6S)-2,6-diaminopimelate + succinate. It functions in the pathway amino-acid biosynthesis; L-lysine biosynthesis via DAP pathway; LL-2,6-diaminopimelate from (S)-tetrahydrodipicolinate (succinylase route): step 3/3. In terms of biological role, catalyzes the hydrolysis of N-succinyl-L,L-diaminopimelic acid (SDAP), forming succinate and LL-2,6-diaminopimelate (DAP), an intermediate involved in the bacterial biosynthesis of lysine and meso-diaminopimelic acid, an essential component of bacterial cell walls. The sequence is that of Succinyl-diaminopimelate desuccinylase from Acinetobacter baumannii (strain AB0057).